Consider the following 326-residue polypeptide: Endo-beta-1,4-glucanase A (326 aa).

The first 19 residues, 1–19, serve as a signal peptide directing secretion; the sequence is MRSLVLLSSVLALVAPSKG. E150 functions as the Proton donor in the catalytic mechanism. Residue E257 is the Nucleophile of the active site.

It belongs to the glycosyl hydrolase 5 (cellulase A) family.

Its subcellular location is the secreted. It catalyses the reaction Endohydrolysis of (1-&gt;4)-beta-D-glucosidic linkages in cellulose, lichenin and cereal beta-D-glucans.. Has endoglucanase activity on substrates containing beta-1,4 glycosidic bonds, like in carboxymethylcellulose (CMC), hydroxyethylcellulose (HEC) and beta-glucan. Involved in the degradation of complex natural cellulosic substrates. The protein is Endo-beta-1,4-glucanase A (eglA) of Emericella nidulans (strain FGSC A4 / ATCC 38163 / CBS 112.46 / NRRL 194 / M139) (Aspergillus nidulans).